The sequence spans 112 residues: Ig kappa chain V-II region 2S1.3 (112 aa).

The segment at 1–23 (DIVMTQAAFSNPVTLGTSASFSC) is framework-1. A disulfide bridge connects residues Cys23 and Cys93. The segment at 24–39 (RSSKSLQQSKGITYLY) is complementarity-determining-1. The segment at 40-54 (WYLQKPGQSPQLLIY) is framework-2. The interval 55–61 (QMSNLAS) is complementarity-determining-2. A framework-3 region spans residues 62–93 (GVPDRFSGSGSGTDFTLRISRVEAEDVGVYYC). The interval 94-102 (ANLQELPYT) is complementarity-determining-3. Residues 103 to 112 (FGGGTKLEIK) are framework-4.

In Mus musculus (Mouse), this protein is Ig kappa chain V-II region 2S1.3.